A 134-amino-acid polypeptide reads, in one-letter code: Arginine decarboxylase proenzyme (134 aa).

Ser82 serves as the catalytic Schiff-base intermediate with substrate; via pyruvic acid. Ser82 is modified (pyruvic acid (Ser); by autocatalysis). The active-site Proton acceptor; for processing activity is the His87. The Proton donor; for catalytic activity role is filled by Cys102.

The protein belongs to the prokaryotic AdoMetDC family. Type 1 subfamily. In terms of assembly, heterooctamer of four alpha and four beta chains arranged as a tetramer of alpha/beta heterodimers. The cofactor is pyruvate. Is synthesized initially as an inactive proenzyme. Formation of the active enzyme involves a self-maturation process in which the active site pyruvoyl group is generated from an internal serine residue via an autocatalytic post-translational modification. Two non-identical subunits are generated from the proenzyme in this reaction, and the pyruvate is formed at the N-terminus of the alpha chain, which is derived from the carboxyl end of the proenzyme. The post-translation cleavage follows an unusual pathway, termed non-hydrolytic serinolysis, in which the side chain hydroxyl group of the serine supplies its oxygen atom to form the C-terminus of the beta chain, while the remainder of the serine residue undergoes an oxidative deamination to produce ammonia and the pyruvoyl group blocking the N-terminus of the alpha chain.

The catalysed reaction is L-arginine + H(+) = agmatine + CO2. The protein operates within amine and polyamine biosynthesis; agmatine biosynthesis; agmatine from L-arginine: step 1/1. Its activity is regulated as follows. Highly competitively inhibited by L-argininamide and L-arginine methyl ester. Also inhibited by alpha-difluoromethylarginine. Is not stimulated by potassium chloride as observed for other decarboxylases. Functionally, specifically catalyzes the decarboxylation of L-arginine to agmatine. Is also able to decarboxylate L-canavanine, although less efficiently. Has no S-adenosylmethionine decarboxylase (AdoMetDC) activity. This Saccharolobus solfataricus (strain ATCC 35092 / DSM 1617 / JCM 11322 / P2) (Sulfolobus solfataricus) protein is Arginine decarboxylase proenzyme.